A 28-amino-acid polypeptide reads, in one-letter code: Basic phospholipase A2 homolog BmatTX-II (28 aa).

As to quaternary structure, monomer. In terms of tissue distribution, expressed by the venom gland.

Its subcellular location is the secreted. Functionally, snake venom phospholipase A2 homolog that lacks enzymatic activity. Shows high myotoxic activity, neutrophil activation (demonstrated by activation induction of IL-1beta production), and slight cytotoxicity against Jurkat (leukemia T) and SK-BR-3 (breast adenocarcinoma) tumor cell lines. A model of myotoxic mechanism has been proposed: an apo Lys49-PLA2 is activated by the entrance of a hydrophobic molecule (e.g. fatty acid) at the hydrophobic channel of the protein leading to a reorientation of a monomer. This reorientation causes a transition between 'inactive' to 'active' states, causing alignment of C-terminal and membrane-docking sites (MDoS) side-by-side and putting the membrane-disruption sites (MDiS) in the same plane, exposed to solvent and in a symmetric position for both monomers. The MDoS region stabilizes the toxin on membrane by the interaction of charged residues with phospholipid head groups. Subsequently, the MDiS region destabilizes the membrane with penetration of hydrophobic residues. This insertion causes a disorganization of the membrane, allowing an uncontrolled influx of ions (i.e. calcium and sodium), and eventually triggering irreversible intracellular alterations and cell death. This chain is Basic phospholipase A2 homolog BmatTX-II, found in Bothrops mattogrossensis (Pitviper).